The chain runs to 511 residues: Exodeoxyribonuclease 7 large subunit (511 aa).

The protein belongs to the XseA family. Heterooligomer composed of large and small subunits.

The protein resides in the cytoplasm. The enzyme catalyses Exonucleolytic cleavage in either 5'- to 3'- or 3'- to 5'-direction to yield nucleoside 5'-phosphates.. Its function is as follows. Bidirectionally degrades single-stranded DNA into large acid-insoluble oligonucleotides, which are then degraded further into small acid-soluble oligonucleotides. This is Exodeoxyribonuclease 7 large subunit from Brucella suis biovar 1 (strain 1330).